Here is a 278-residue protein sequence, read N- to C-terminus: Probable endonuclease 4 (278 aa).

9 residues coordinate Zn(2+): His-66, His-106, Glu-142, Asp-176, His-179, His-213, Asp-226, His-228, and Glu-258.

The protein belongs to the AP endonuclease 2 family. The cofactor is Zn(2+).

The enzyme catalyses Endonucleolytic cleavage to 5'-phosphooligonucleotide end-products.. Functionally, endonuclease IV plays a role in DNA repair. It cleaves phosphodiester bonds at apurinic or apyrimidinic (AP) sites, generating a 3'-hydroxyl group and a 5'-terminal sugar phosphate. This Halothermothrix orenii (strain H 168 / OCM 544 / DSM 9562) protein is Probable endonuclease 4.